We begin with the raw amino-acid sequence, 681 residues long: Sodium-dependent phosphate transporter 1 (681 aa).

A run of 6 helical transmembrane segments spans residues 25-45 (YLWM…SVGA), 66-86 (ACIL…AKVS), 106-126 (LMAG…VASF), 162-182 (IVMS…ILFF), 207-227 (ACTV…LLGF), and 234-254 (GTIL…WFFV). A phosphoserine mark is found at S269 and S273. The tract at residues 269–296 (SPSESPLMEKKNSLKEDHEETKLSVSDI) is disordered. The span at 275–290 (LMEKKNSLKEDHEETK) shows a compositional bias: basic and acidic residues. 4 helical membrane passes run 515–535 (VSLL…FAHG), 562–582 (VATP…GLWV), 604–624 (FSIE…GLPI), and 654–674 (IFMA…AIMA). The interval 554–562 (DTGDVSSKV) is a.

Belongs to the inorganic phosphate transporter (PiT) (TC 2.A.20) family.

The protein resides in the cell membrane. It catalyses the reaction 2 Na(+)(out) + phosphate(out) = 2 Na(+)(in) + phosphate(in). Functionally, sodium-phosphate symporter which preferentially transports the monovalent form of phosphate with a stoichiometry of two sodium ions per phosphate ion. May play a role in extracellular matrix and cartilage calcification as well as in vascular calcification. Essential for cell proliferation but this function is independent of its phosphate transporter activity. The polypeptide is Sodium-dependent phosphate transporter 1 (Slc20a1) (Felis catus (Cat)).